Here is a 179-residue protein sequence, read N- to C-terminus: Protein GrpE (179 aa).

Positions methionine 1 to glutamine 45 are disordered. Residues glutamate 33–glutamine 45 are compositionally biased toward basic and acidic residues.

Belongs to the GrpE family. As to quaternary structure, homodimer.

The protein resides in the cytoplasm. In terms of biological role, participates actively in the response to hyperosmotic and heat shock by preventing the aggregation of stress-denatured proteins, in association with DnaK and GrpE. It is the nucleotide exchange factor for DnaK and may function as a thermosensor. Unfolded proteins bind initially to DnaJ; upon interaction with the DnaJ-bound protein, DnaK hydrolyzes its bound ATP, resulting in the formation of a stable complex. GrpE releases ADP from DnaK; ATP binding to DnaK triggers the release of the substrate protein, thus completing the reaction cycle. Several rounds of ATP-dependent interactions between DnaJ, DnaK and GrpE are required for fully efficient folding. The protein is Protein GrpE of Brevibacillus choshinensis.